Here is a 595-residue protein sequence, read N- to C-terminus: DNA primase (595 aa).

Residues 38–62 form a CHC2-type zinc finger; it reads CPFHQEKTPSFTVSDSKRFFYCFGC. A Toprim domain is found at 250 to 332; the sequence is NHSILVEGYF…EKKISFIRLP (83 aa). Positions 256, 300, and 302 each coordinate Mg(2+).

The protein belongs to the DnaG primase family. In terms of assembly, monomer. Interacts with DnaB. Zn(2+) is required as a cofactor. The cofactor is Mg(2+).

It catalyses the reaction ssDNA + n NTP = ssDNA/pppN(pN)n-1 hybrid + (n-1) diphosphate.. Functionally, RNA polymerase that catalyzes the synthesis of short RNA molecules used as primers for DNA polymerase during DNA replication. This chain is DNA primase, found in Rickettsia felis (strain ATCC VR-1525 / URRWXCal2) (Rickettsia azadi).